A 185-amino-acid polypeptide reads, in one-letter code: Putative RNA (cytidine(34)-2'-O)-methyltransferase (185 aa).

S-adenosyl-L-methionine-binding residues include I80, G105, and I126.

It belongs to the class IV-like SAM-binding methyltransferase superfamily. RNA methyltransferase TrmH family. TrmL subfamily.

The protein resides in the cytoplasm. It catalyses the reaction cytidine(34) in tRNA + S-adenosyl-L-methionine = 2'-O-methylcytidine(34) in tRNA + S-adenosyl-L-homocysteine + H(+). The catalysed reaction is 5-carboxymethylaminomethyluridine(34) in tRNA(Leu) + S-adenosyl-L-methionine = 5-carboxymethylaminomethyl-2'-O-methyluridine(34) in tRNA(Leu) + S-adenosyl-L-homocysteine + H(+). Its function is as follows. Could methylate the ribose at the nucleotide 34 wobble position in tRNA. The polypeptide is Putative RNA (cytidine(34)-2'-O)-methyltransferase (Lactobacillus gasseri (strain ATCC 33323 / DSM 20243 / BCRC 14619 / CIP 102991 / JCM 1131 / KCTC 3163 / NCIMB 11718 / NCTC 13722 / AM63)).